The primary structure comprises 182 residues: Ribulose bisphosphate carboxylase small subunit, chloroplastic (182 aa).

Residues 1–58 (MACSMISSATVAAVSRASPAQSSMVAPFTCLKSTSAFPVTQKTNNDITSIASNGGRVQ) constitute a chloroplast transit peptide.

It belongs to the RuBisCO small chain family. As to quaternary structure, heterohexadecamer of 8 large and 8 small subunits.

The protein resides in the plastid. The protein localises to the chloroplast. In terms of biological role, ruBisCO catalyzes two reactions: the carboxylation of D-ribulose 1,5-bisphosphate, the primary event in carbon dioxide fixation, as well as the oxidative fragmentation of the pentose substrate. Both reactions occur simultaneously and in competition at the same active site. Although the small subunit is not catalytic it is essential for maximal activity. The chain is Ribulose bisphosphate carboxylase small subunit, chloroplastic from Betula pendula (European white birch).